The chain runs to 497 residues: Argininosuccinate lyase (497 aa).

It belongs to the lyase 1 family. Argininosuccinate lyase subfamily.

It localises to the cytoplasm. The catalysed reaction is 2-(N(omega)-L-arginino)succinate = fumarate + L-arginine. Its pathway is amino-acid biosynthesis; L-arginine biosynthesis; L-arginine from L-ornithine and carbamoyl phosphate: step 3/3. This Clavibacter michiganensis subsp. michiganensis (strain NCPPB 382) protein is Argininosuccinate lyase.